The primary structure comprises 306 residues: Meiotically up-regulated gene 73 protein (306 aa).

7 helical membrane-spanning segments follow: residues 28-48, 59-79, 103-123, 125-145, 154-174, 190-210, and 224-244; these read YWAV…VSIF, FFSI…CNYG, YIQW…TVGV, ILEI…LLAA, WAYY…SVVL, FLWS…CWIL, and IFYS…FSWM.

The protein belongs to the archaeal/bacterial/fungal opsin family.

The protein localises to the membrane. Functionally, has a role in meiosis. The protein is Meiotically up-regulated gene 73 protein (mug73) of Schizosaccharomyces pombe (strain 972 / ATCC 24843) (Fission yeast).